The sequence spans 573 residues: MQVAIGIVVVAIVIYAAVKGFQFYIDKQVRQLTERQQALVKQSQTTDFEKIEQLGLTGGSLAKLEALQSAGQEVDNDQLPAVSEQLTAITSQARGIRFLDAQQNLKKVAATLDTIEQRQAEIRQGLQALDDADAAHRQAVASLEKKYQNIRKTLLSQNFSFGPSIDKLEDQLANLESDFDHFSELAKAGDHDAAEKVLDQLHHDTGTLEMDIDRIPPIYKDLVSGFPDQLAELASGYQQLTAQHFHFEVESIEPEIKALQQAIDDNIALLGDLKVTDAENGNHAIEKRIDHLYDVMQAEIDAKAVVDQQQEEISKFLTHAMNQNHRLQIELDRLAQSYTLNNGEVERTRELNEQLKNIEAVYQADVTAITSKQAVFSEIAAHFAEQDEQLKGIEEEQVAINKGVASLTAEESKAHETLQRFDFEIHAIKRQVENLNLPGLPKDYLDYFKVVAKEIERLDHDINKLVINMDDITKQLIVIQADMATLKEKTSDLTDAAVMAEQLLQYANRYKTNHEEVQEASVEAQRLFTETHDYARSLEVIATAVDKVDPGSYKRIEDSYYANKQADKMNDEA.

Topologically, residues M1–Q2 are extracellular. Residues V3–F21 traverse the membrane as a helical segment. At Q22–A573 the chain is on the cytoplasmic side. Coiled coils occupy residues D100–A188, L317–A364, and E416–E488.

The protein belongs to the EzrA family.

Its subcellular location is the cell membrane. Its function is as follows. Negative regulator of FtsZ ring formation; modulates the frequency and position of FtsZ ring formation. Inhibits FtsZ ring formation at polar sites. Interacts either with FtsZ or with one of its binding partners to promote depolymerization. The protein is Septation ring formation regulator EzrA of Lactiplantibacillus plantarum (strain ATCC BAA-793 / NCIMB 8826 / WCFS1) (Lactobacillus plantarum).